We begin with the raw amino-acid sequence, 314 residues long: tRNA-cytidine(32) 2-sulfurtransferase (314 aa).

Residues 39–44 (SGGKDS) carry the PP-loop motif motif. [4Fe-4S] cluster is bound by residues C114, C117, and C205.

It belongs to the TtcA family. In terms of assembly, homodimer. It depends on Mg(2+) as a cofactor. [4Fe-4S] cluster serves as cofactor.

The protein localises to the cytoplasm. It catalyses the reaction cytidine(32) in tRNA + S-sulfanyl-L-cysteinyl-[cysteine desulfurase] + AH2 + ATP = 2-thiocytidine(32) in tRNA + L-cysteinyl-[cysteine desulfurase] + A + AMP + diphosphate + H(+). Its pathway is tRNA modification. In terms of biological role, catalyzes the ATP-dependent 2-thiolation of cytidine in position 32 of tRNA, to form 2-thiocytidine (s(2)C32). The sulfur atoms are provided by the cysteine/cysteine desulfurase (IscS) system. This chain is tRNA-cytidine(32) 2-sulfurtransferase, found in Cupriavidus metallidurans (strain ATCC 43123 / DSM 2839 / NBRC 102507 / CH34) (Ralstonia metallidurans).